The sequence spans 186 residues: Mediator of RNA polymerase II transcription subunit 10a (186 aa).

It belongs to the Mediator complex subunit 10 family. In terms of assembly, mono-, di- and oligomers. Component of the Mediator complex. Interacts with GEBPL.

Its subcellular location is the nucleus. Functionally, component of the Mediator complex, a coactivator involved in the regulated transcription of nearly all RNA polymerase II-dependent genes. Mediator functions as a bridge to convey information from gene-specific regulatory proteins to the basal RNA polymerase II transcription machinery. The Mediator complex, having a compact conformation in its free form, is recruited to promoters by direct interactions with regulatory proteins and serves for the assembly of a functional pre-initiation complex with RNA polymerase II and the general transcription factors. The protein is Mediator of RNA polymerase II transcription subunit 10a of Arabidopsis thaliana (Mouse-ear cress).